The primary structure comprises 436 residues: MTVTSDFTQKLYENFAENTKLRAVENAVTKNGLLSSLEVRGSHAANLPEFSIDLTKDPVTNQKQSGRCWMFAALNTFRHKFINEFKTEDFEFSQAYTFFWDKYEKSNWFMEQIIGDIEMDDRRLKFLLQTPQQDGGQWDMMVAIFEKYGIVPKAVYPESQASSSSRELNQYLNKLLRQDAEILRYTIEQGGDVEAVKEELLQEVFNFLAVTLGLPPQNFEFAFRNKDNEYKKFVGSPKEFYNEYVGIDLNNYVSVINAPTADKPYNKSYTVEFLGNVVGGKEVKHLNVEMDRFKKLAIAQMQAGETVWFGCDVGQESNRSAGLLTMDSYDFKSSLDIEFTQSKAGRLDYGESLMTHAMVLAGVDLDADGNSTKWKVENSWGKDAGQKGYFVASDEWMDEYTYQIVVRKDLLTEEELAAYEEKPQVLLPWDPMGALA.

Residues C68, H356, and N378 contribute to the active site.

Belongs to the peptidase C1 family. As to quaternary structure, homohexamer.

The catalysed reaction is Inactivates bleomycin B2 (a cytotoxic glycometallopeptide) by hydrolysis of a carboxyamide bond of beta-aminoalanine, but also shows general aminopeptidase activity. The specificity varies somewhat with source, but amino acid arylamides of Met, Leu and Ala are preferred.. Hydrolyzes naphthylamide-substituted amino acids as well as di- and tripeptides in which the half-cystine residue is involved in a disulfide loop, notably in oxytocin and vasopressin. Also has a bleomycin hydrolase activity. In Lactococcus lactis subsp. lactis (strain IL1403) (Streptococcus lactis), this protein is Aminopeptidase C (pepC).